The primary structure comprises 399 residues: 26S proteasome regulatory subunit S10B homolog B (399 aa).

ATP is bound at residue 180–187 (GPPGTGKT). A Glycyl lysine isopeptide (Lys-Gly) (interchain with G-Cter in ubiquitin) cross-link involves residue lysine 203.

Belongs to the AAA ATPase family. As to quaternary structure, component of the 19S regulatory particle (RP/PA700) base subcomplex of the 26S proteasome. The 26S proteasome is composed of a core protease (CP), known as the 20S proteasome, capped at one or both ends by the 19S regulatory particle (RP/PA700). The RP/PA700 complex is composed of at least 17 different subunits in two subcomplexes, the base and the lid, which form the portions proximal and distal to the 20S proteolytic core, respectively.

It is found in the cytoplasm. The protein resides in the nucleus. Its function is as follows. The 26S proteasome is involved in the ATP-dependent degradation of ubiquitinated proteins. The regulatory (or ATPase) complex confers ATP dependency and substrate specificity to the 26S complex. This Arabidopsis thaliana (Mouse-ear cress) protein is 26S proteasome regulatory subunit S10B homolog B (RPT4B).